We begin with the raw amino-acid sequence, 430 residues long: Adenylosuccinate synthetase (430 aa).

GTP is bound by residues 12 to 18 (GDEGKGK) and 40 to 42 (GHT). Asp-13 acts as the Proton acceptor in catalysis. The Mg(2+) site is built by Asp-13 and Gly-40. Residues 13 to 16 (DEGK), 38 to 41 (NAGH), Thr-128, Arg-142, Gln-223, Thr-238, and Arg-302 contribute to the IMP site. His-41 serves as the catalytic Proton donor. 298–304 (TVTKRPR) lines the substrate pocket. GTP contacts are provided by residues Arg-304, 330–332 (CVD), and 412–414 (SVG).

It belongs to the adenylosuccinate synthetase family. As to quaternary structure, homodimer. Mg(2+) serves as cofactor.

It localises to the cytoplasm. The enzyme catalyses IMP + L-aspartate + GTP = N(6)-(1,2-dicarboxyethyl)-AMP + GDP + phosphate + 2 H(+). It functions in the pathway purine metabolism; AMP biosynthesis via de novo pathway; AMP from IMP: step 1/2. In terms of biological role, plays an important role in the de novo pathway of purine nucleotide biosynthesis. Catalyzes the first committed step in the biosynthesis of AMP from IMP. This Ligilactobacillus salivarius (strain UCC118) (Lactobacillus salivarius) protein is Adenylosuccinate synthetase.